Reading from the N-terminus, the 218-residue chain is UPF0502 protein CJA_1529 (218 aa).

It belongs to the UPF0502 family.

This is UPF0502 protein CJA_1529 from Cellvibrio japonicus (strain Ueda107) (Pseudomonas fluorescens subsp. cellulosa).